Here is a 9439-residue protein sequence, read N- to C-terminus: Extracellular matrix-binding protein ebh (9439 aa).

30 FIVAR domains span residues 1815 to 1871 (ARRR…VNSA), 1901 to 1957 (AKEQ…INDA), 1985 to 2041 (AYDT…VRDA), 2071 to 2127 (AKKR…ITSE), 2155 to 2211 (AYNK…VTQA), 2241 to 2297 (AKNR…ISSE), 2325 to 2381 (AYNK…VEDA), 2411 to 2467 (AKEK…ITEN), 2488 to 2551 (DTTS…VNNA), 2581 to 2638 (ARNR…STEI), 2665 to 2720 (AKNQ…IRTN), 2748 to 2804 (AKTA…VSDE), 2832 to 2888 (AYNQ…VNNA), 2918 to 2974 (AKEQ…ISNA), 3002 to 3058 (AYNQ…VTAA), 3088 to 3144 (AKQQ…ITNE), 3172 to 3228 (AYNQ…VAQA), 3258 to 3314 (AKNQ…ISDE), 3335 to 3398 (DTTE…VNNA), 3428 to 3484 (ARLN…ITTE), 3512 to 3567 (AKTA…IKTN), 3595 to 3650 (IKRQ…VKES), 3678 to 3733 (AKNR…IRQN), 3802 to 3860 (SMTA…IDQK), 3928 to 3983 (AMTQ…LDPA), 4056 to 4114 (AMQA…VNQK), 4182 to 4240 (SMGT…VDNA), 4308 to 4365 (AMHT…INQK), 4433 to 4491 (VMEQ…IEQA), and 4559 to 4617 (SMQT…IDQT). Basic and acidic residues predominate over residues 2495 to 2507 (EVRKLSRRGDTNN). The segment at 2495–2514 (EVRKLSRRGDTNNKKPSSVS) is disordered. A compositionally biased stretch (polar residues) spans 2925 to 2938 (AVDQVPSTEGMTQQ). The interval 2925-2951 (AVDQVPSTEGMTQQTKDDYNSKQQAAQ) is disordered. The segment at 4649–4674 (GYLNDPQKSGEESLVNGSNTRSEVEE) is disordered. FIVAR domains are found at residues 4685 to 4743 (AMKQ…IEQK), 4811 to 4869 (AMQA…IEQA), 4937 to 4995 (AMSN…IEQA), 5063 to 5115 (AMEA…VLDK), 5189 to 5246 (AMLG…INQL), 5314 to 5372 (LMGA…VTTA), 5440 to 5498 (AMGE…IDQA), 5566 to 5624 (AMKK…ITNA), 5692 to 5750 (AMKQ…IADT), 5818 to 5875 (DMST…LQDL), 5943 to 6000 (AMKA…IKQA), 6068 to 6126 (KMEE…INRT), 6194 to 6252 (AMQQ…IQAI), and 6320 to 6378 (EMGT…IADA). Over residues 5699–5712 (QVNQDDQISNSSPF) the composition is skewed to polar residues. Positions 5699–5719 (QVNQDDQISNSSPFINEDSDK) are disordered. Residues 6413–6434 (NNSQRQSEHDEINSAPSRTEVS) are disordered. 18 consecutive FIVAR domains span residues 6446–6504 (AMRQ…IEDA), 6572–6630 (AMKA…INRA), 6698–6755 (SMNQ…IDQA), 6823–6877 (TMKA…ANDE), 6949–7007 (AMKK…INTI), 7075–7133 (SMNT…VERA), 7201–7259 (DMKK…IENA), 7327–7384 (AMKH…IKQL), 7452–7510 (AMEN…IEHA), 7578–7636 (AMKA…INSI), 7704–7762 (AMET…VDIV), 7830–7888 (AMKS…VRQA), 7956–8010 (VMGK…TKQA), 8078–8137 (IMGE…IDTF), 8205–8264 (AMKS…IQGL), 8332–8391 (AMKD…VLGL), 8459–8518 (KMKL…IQHL), and 8587–8643 (AMQG…ANII). The chain crosses the membrane as a helical span at residues 9306–9324 (TVGVITLTGLLSSFWLVLA). 3 stretches are compositionally biased toward basic and acidic residues: residues 9363 to 9375 (DKEE…DKHS), 9386 to 9395 (EKQLSEEDIH), and 9404 to 9413 (QNSDNKDTKQ). A disordered region spans residues 9363–9439 (DKEEQIQNDD…VVKTKKRSKK (77 aa)). The span at 9414–9439 (KKVTSKKKKTPQSTKKVVKTKKRSKK) shows a compositional bias: basic residues.

It localises to the cell membrane. The polypeptide is Extracellular matrix-binding protein ebh (ebh) (Staphylococcus epidermidis (strain ATCC 12228 / FDA PCI 1200)).